The following is an 81-amino-acid chain: Small ribosomal subunit protein bS16 (81 aa).

The protein belongs to the bacterial ribosomal protein bS16 family.

This Agathobacter rectalis (strain ATCC 33656 / DSM 3377 / JCM 17463 / KCTC 5835 / VPI 0990) (Eubacterium rectale) protein is Small ribosomal subunit protein bS16.